The following is a 179-amino-acid chain: ATP synthase subunit delta (179 aa).

It belongs to the ATPase delta chain family. F-type ATPases have 2 components, F(1) - the catalytic core - and F(0) - the membrane proton channel. F(1) has five subunits: alpha(3), beta(3), gamma(1), delta(1), epsilon(1). F(0) has three main subunits: a(1), b(2) and c(10-14). The alpha and beta chains form an alternating ring which encloses part of the gamma chain. F(1) is attached to F(0) by a central stalk formed by the gamma and epsilon chains, while a peripheral stalk is formed by the delta and b chains.

Its subcellular location is the cell inner membrane. Its function is as follows. F(1)F(0) ATP synthase produces ATP from ADP in the presence of a proton or sodium gradient. F-type ATPases consist of two structural domains, F(1) containing the extramembraneous catalytic core and F(0) containing the membrane proton channel, linked together by a central stalk and a peripheral stalk. During catalysis, ATP synthesis in the catalytic domain of F(1) is coupled via a rotary mechanism of the central stalk subunits to proton translocation. This protein is part of the stalk that links CF(0) to CF(1). It either transmits conformational changes from CF(0) to CF(1) or is implicated in proton conduction. The polypeptide is ATP synthase subunit delta (Acidithiobacillus ferrooxidans (strain ATCC 23270 / DSM 14882 / CIP 104768 / NCIMB 8455) (Ferrobacillus ferrooxidans (strain ATCC 23270))).